The sequence spans 951 residues: Leucine-rich repeat-containing G-protein coupled receptor 4 (951 aa).

Residues 1 to 24 (MPGPLGLLCFLALGLLGSAGPSGA) form the signal peptide. One can recognise an LRRNT domain in the interval 25–57 (APPLCAAPCSCDGDRRVDCSGKGLTAVPEGLSA). The Extracellular portion of the chain corresponds to 25–544 (APPLCAAPCS…LLGSWMIRLT (520 aa)). Cystine bridges form between Cys29-Cys35 and Cys33-Cys43. LRR repeat units lie at residues 58 to 79 (FTQA…AFKN), 82 to 103 (FLEE…ALSG), 106 to 127 (ELKV…AIRG), 130 to 151 (ALQS…SFEG), 154 to 177 (QLRH…SNLP), 178 to 199 (TLQA…AFTN), 202 to 223 (SLVV…CFDG), 226 to 247 (NLET…IKAL), 249 to 270 (SLKE…AFDG), and 273 to 294 (LLRT…AFHN). N-linked (GlcNAc...) asparagine glycosylation is present at Asn68. The N-linked (GlcNAc...) asparagine glycan is linked to Asn199. N-linked (GlcNAc...) asparagine glycans are attached at residues Asn294 and Asn314. LRR repeat units follow at residues 320–341 (HLES…LCQE), 344–365 (MLRT…NGCH), 366–387 (ALEE…TFQG), 390–411 (SLRI…AFAT), and 414–435 (PITN…GLNG). Cysteines 339 and 364 form a disulfide. 2 disulfides stabilise this stretch: Cys470-Cys522 and Cys471-Cys476. Asn505 is a glycosylation site (N-linked (GlcNAc...) asparagine). The chain crosses the membrane as a helical span at residues 545-565 (VWFIFLVALFFNLLVILTTFA). Residues 566-575 (SCTSLPSSKL) are Cytoplasmic-facing. The helical transmembrane segment at 576–596 (FIGLISVSNLFMGIYTGILTF) threads the bilayer. The Extracellular segment spans residues 597-620 (LDAVSWGRFAEFGIWWETGSGCKV). Cys618 and Cys693 form a disulfide bridge. The helical transmembrane segment at 621–641 (AGFLAVFSSESAIFLLMLATV) threads the bilayer. The Cytoplasmic segment spans residues 642 to 661 (ERSLSAKDIMKNGKSNHLKQ). The helical transmembrane segment at 662-682 (FRVAALLAFLGATVAGCFPLF) threads the bilayer. Topologically, residues 683–703 (HRGEYSASPLCLPFPTGETPS) are extracellular. Residues 704–724 (LGFTVTLVLLNSLAFLLMAVI) traverse the membrane as a helical segment. Over 725–756 (YTKLYCNLEKEDLSENSQSSMIKHVAWLIFTN) the chain is Cytoplasmic. Residues 757 to 777 (CIFFCPVAFFSFAPLITAISI) form a helical membrane-spanning segment. Topologically, residues 778–783 (SPEIMK) are extracellular. Residues 784-804 (SVTLIFFPLPACLNPVLYVFF) traverse the membrane as a helical segment. Residues 805 to 951 (NPKFKEDWKL…YAYNLPRVKD (147 aa)) are Cytoplasmic-facing. Ser920 is subject to Phosphoserine.

Belongs to the G-protein coupled receptor 1 family. As to expression, expressed in multiple steroidogenic tissues: placenta, ovary, testis and adrenal. Expressed also in spinal cord, thyroid, stomach, trachea, heart, pancreas, kidney, prostate and spleen.

It localises to the cell membrane. Its function is as follows. Receptor for R-spondins that potentiates the canonical Wnt signaling pathway and is involved in the formation of various organs. Upon binding to R-spondins (RSPO1, RSPO2, RSPO3 or RSPO4), associates with phosphorylated LRP6 and frizzled receptors that are activated by extracellular Wnt receptors, triggering the canonical Wnt signaling pathway to increase expression of target genes. In contrast to classical G-protein coupled receptors, does not activate heterotrimeric G-proteins to transduce the signal. Its function as activator of the Wnt signaling pathway is required for the development of various organs, including liver, kidney, intestine, bone, reproductive tract and eye. May also act as a receptor for norrin (NDP), such results however require additional confirmation in vivo. Required during spermatogenesis to activate the Wnt signaling pathway in peritubular myoid cells. Required for the maintenance of intestinal stem cells and Paneth cell differentiation in postnatal intestinal crypts. Acts as a regulator of bone formation and remodeling. Involved in kidney development; required for maintaining the ureteric bud in an undifferentiated state. Involved in the development of the anterior segment of the eye. Required during erythropoiesis. Also acts as a negative regulator of innate immunity by inhibiting TLR2/TLR4 associated pattern-recognition and pro-inflammatory cytokine production. Plays an important role in regulating the circadian rhythms of plasma lipids, partially through regulating the rhythmic expression of MTTP. Required for proper development of GnRH neurons (gonadotropin-releasing hormone expressing neurons) that control the release of reproductive hormones from the pituitary gland. The polypeptide is Leucine-rich repeat-containing G-protein coupled receptor 4 (LGR4) (Homo sapiens (Human)).